We begin with the raw amino-acid sequence, 834 residues long: ABC transporter A family member 11 (834 aa).

7 helical membrane passes run 35-55 (FFIL…ILNN), 188-208 (MPMI…ILIV), 235-255 (VFDY…LYSF), 269-289 (FLLF…LQFI), 297-319 (NKWL…SVAF), 324-346 (PLIV…LKAL), and 355-375 (SYTI…IYFI). The 242-residue stretch at 452-693 (LDKPSIIERC…YGSGYTIDII (242 aa)) folds into the ABC transporter domain. An ATP-binding site is contributed by 495 to 502 (GPNGSGKS). Over residues 779-789 (KQQTNNKSNII) the composition is skewed to polar residues. The disordered stretch occupies residues 779–834 (KQQTNNKSNIINNNNNNNNNNNNNNNNNNNNNNNNNNNNNNNNNTNNNTNNNQLIN). A compositionally biased stretch (low complexity) spans 790 to 834 (NNNNNNNNNNNNNNNNNNNNNNNNNNNNNNNNNTNNNTNNNQLIN).

It belongs to the ABC transporter superfamily. ABCA family.

Its subcellular location is the membrane. This chain is ABC transporter A family member 11 (abcA11), found in Dictyostelium discoideum (Social amoeba).